A 103-amino-acid polypeptide reads, in one-letter code: Sec-independent protein translocase protein TatA (103 aa).

A helical membrane pass occupies residues 1 to 21 (MGNIFSPTHLIVILLIIIVLF). Residues 77–103 (KRATTRVKGSSSSRKGKTSVVKKQRVK) form a disordered region. A compositionally biased stretch (basic residues) spans 90–103 (RKGKTSVVKKQRVK).

Belongs to the TatA/E family. In terms of assembly, the Tat system comprises two distinct complexes: a TatABC complex, containing multiple copies of TatA, TatB and TatC subunits, and a separate TatA complex, containing only TatA subunits. Substrates initially bind to the TatABC complex, which probably triggers association of the separate TatA complex to form the active translocon.

It is found in the cell inner membrane. Functionally, part of the twin-arginine translocation (Tat) system that transports large folded proteins containing a characteristic twin-arginine motif in their signal peptide across membranes. TatA could form the protein-conducting channel of the Tat system. The protein is Sec-independent protein translocase protein TatA of Bartonella henselae (strain ATCC 49882 / DSM 28221 / CCUG 30454 / Houston 1) (Rochalimaea henselae).